The primary structure comprises 933 residues: MNSGTTLHLDRLSLETPSERTCFCIKCWESVPSTSQVWFGGKCWHSDCFKCVNCNKKLDPSSEDFSQDDQKQIFCKLCVDICNGCSTPICEFNAVSNSQANHPCCSNCRAFINSNAFGKFKGQHYCLPCLRKQDEENQKAVMESASGFIPLRNIAQTAENTSLTGQNQGFQNPHFIASDSPSSVLSGRMQNTSSPTNSLRPQLKVQTNGYETPGDINSAKSYKDIQKDFLLKPKNSFVKTSPSPLANGPSFRSANASPFDSCDSFHSGSSIPIEPVSSRQSSVVNNNSVQQPVAYHAFVQSPTENGTLPQLPKNESVVNPPPLRRSSTMNYKSVSTTTSPSKYGYVSGRIALSPIHLRGALRDVTNKCNLKVPRNRNSLSNLDEYYVNGLESDETPTKARFPRYPTVFNKLDDKRLSSEPNGLKKRLTNSSNYEASPRAKSLNLSQVSLHQACEPEYNRSSLVRASDVFTSNVFDATEESANELAIRISELQAEVGTLLLEATSLASIIEQQTPVSPEAFKQELVADLNYRLDYLRKSFQPELSTLLLRRDALSTTVSKLQNAYSTVMEETAYLNVKNTELVSLNNQLERELAYLREQQHKKRTSSSFGIFNNDKKSNRTISTPSPRESFSRLQMVASSLGFRPKDNKDKESGGYNKRNSKIDLKKSFSKRFHWKRDSPHMSSTPSISEEHLASEEQEDFVPAVGHCKLCGKYSNELRAHYQDCVSSTIDRQYQSKKSESPVWALNPDDFDQNRLTLLRVPTLIVSCINFIESYGMDFEGLYRKSGATSQMKKIVALLRNEDTVLDPSEDISAVTSVFKQYLRNLPNPIITYDQYFPFITAANCASFQDKLDGFIMVIKSLPPAHAEILQLIIRHLARVAAYSHANRMTSKNLAVVFSPTLIRDPDNSRDVIDMTVKNYSLAFLIDHVHEVFA.

LIM zinc-binding domains follow at residues 22–80 (CFCI…LCVD) and 81–129 (ICNG…CLPC). Disordered regions lie at residues 181-200 (PSSVLSGRMQNTSSPTNSLR) and 304-338 (ENGTLPQLPKNESVVNPPPLRRSSTMNYKSVSTTT). Over residues 325-338 (RSSTMNYKSVSTTT) the composition is skewed to polar residues. A Phosphoserine modification is found at Ser-353. 3 disordered regions span residues 415–435 (RLSSEPNGLKKRLTNSSNYEA), 605–628 (SSSFGIFNNDKKSNRTISTPSPRE), and 641–660 (GFRPKDNKDKESGGYNKRNS). Residues 619–628 (RTISTPSPRE) are compositionally biased toward polar residues. Ser-625 carries the phosphoserine modification. A compositionally biased stretch (basic and acidic residues) spans 643–652 (RPKDNKDKES). Phosphoserine occurs at positions 738 and 740. One can recognise a Rho-GAP domain in the interval 753-932 (NRLTLLRVPT…FLIDHVHEVF (180 aa)).

GTPase-activating protein for Rho-type proteins. The polypeptide is Probable Rho-type GTPase-activating protein 4 (rga4) (Schizosaccharomyces pombe (strain 972 / ATCC 24843) (Fission yeast)).